Here is a 308-residue protein sequence, read N- to C-terminus: C-4 methylsterol oxidase (308 aa).

A helical transmembrane segment spans residues 56 to 76; it reads LLFFLTHEIFYFGRCLPWAII. Positions 145–282 constitute a Fatty acid hydroxylase domain; it reads WAVFFVLEDT…FRWWDFILDT (138 aa). The short motif at 160–164 is the Histidine box-1 element; it reads HRGLH. The short motif at 173 to 177 is the Histidine box-2 element; the sequence is HKQHH. Positions 257–263 match the Histidine box-3 motif; sequence HHDEHHH.

This sequence belongs to the sterol desaturase family. Fe cation serves as cofactor.

The protein resides in the endoplasmic reticulum membrane. It carries out the reaction 4,4-dimethyl-5alpha-cholest-7-en-3beta-ol + 6 Fe(II)-[cytochrome b5] + 3 O2 + 5 H(+) = 4alpha-carboxy-4beta-methyl-5alpha-cholest-7-ene-3beta-ol + 6 Fe(III)-[cytochrome b5] + 4 H2O. Its pathway is steroid biosynthesis; zymosterol biosynthesis; zymosterol from lanosterol: step 3/6. Functionally, C-4 methylsterol oxidase; part of the third module of ergosterol biosynthesis pathway that includes the late steps of the pathway. ERG25 is a catalytic component of the C-4 demethylation complex that catalyzes the conversion of 4,4-dimethylfecosterol into fecosterol via 4-methylfecosterol. Catalyzes the three-step monooxygenation required for the demethylation of 4,4-dimethyl and 4alpha-methylsterols. The third module or late pathway involves the ergosterol synthesis itself through consecutive reactions that mainly occur in the endoplasmic reticulum (ER) membrane. Firstly, the squalene synthase ERG9 catalyzes the condensation of 2 farnesyl pyrophosphate moieties to form squalene, which is the precursor of all steroids. Squalene synthase is crucial for balancing the incorporation of farnesyl diphosphate (FPP) into sterol and nonsterol isoprene synthesis. Secondly, the squalene epoxidase ERG1 catalyzes the stereospecific oxidation of squalene to (S)-2,3-epoxysqualene, which is considered to be a rate-limiting enzyme in steroid biosynthesis. Then, the lanosterol synthase ERG7 catalyzes the cyclization of (S)-2,3 oxidosqualene to lanosterol, a reaction that forms the sterol core. In the next steps, lanosterol is transformed to zymosterol through a complex process involving various demethylation, reduction and desaturation reactions. The lanosterol 14-alpha-demethylase ERG11 (also known as CYP51) catalyzes C14-demethylation of lanosterol to produce 4,4'-dimethyl cholesta-8,14,24-triene-3-beta-ol, which is critical for ergosterol biosynthesis. The C-14 reductase ERG24 reduces the C14=C15 double bond of 4,4-dimethyl-cholesta-8,14,24-trienol to produce 4,4-dimethyl-cholesta-8,24-dienol. 4,4-dimethyl-cholesta-8,24-dienol is substrate of the C-4 demethylation complex ERG25-ERG26-ERG27 in which ERG25 catalyzes the three-step monooxygenation required for the demethylation of 4,4-dimethyl and 4alpha-methylsterols, ERG26 catalyzes the oxidative decarboxylation that results in a reduction of the 3-beta-hydroxy group at the C-3 carbon to an oxo group, and ERG27 is responsible for the reduction of the keto group on the C-3. ERG28 has a role as a scaffold to help anchor ERG25, ERG26 and ERG27 to the endoplasmic reticulum and ERG29 regulates the activity of the iron-containing C4-methylsterol oxidase ERG25. Then, the sterol 24-C-methyltransferase ERG6 catalyzes the methyl transfer from S-adenosyl-methionine to the C-24 of zymosterol to form fecosterol. The C-8 sterol isomerase ERG2 catalyzes the reaction which results in unsaturation at C-7 in the B ring of sterols and thus converts fecosterol to episterol. The sterol-C5-desaturase ERG3 then catalyzes the introduction of a C-5 double bond in the B ring to produce 5-dehydroepisterol. The C-22 sterol desaturase ERG5 further converts 5-dehydroepisterol into ergosta-5,7,22,24(28)-tetraen-3beta-ol by forming the C-22(23) double bond in the sterol side chain. Finally, ergosta-5,7,22,24(28)-tetraen-3beta-ol is substrate of the C-24(28) sterol reductase ERG4 to produce ergosterol. This is C-4 methylsterol oxidase from Candida albicans (strain SC5314 / ATCC MYA-2876) (Yeast).